The primary structure comprises 224 residues: Uridylate kinase (224 aa).

ATP is bound at residue 8 to 12 (KITGK). Position 43 (Gly43) interacts with UMP. 2 residues coordinate ATP: Gly44 and Arg48. UMP-binding positions include Asp66 and 114–120 (LIPGQST). ATP contacts are provided by Ser140, Tyr146, and Asp149.

Belongs to the UMP kinase family. In terms of assembly, homohexamer.

The protein resides in the cytoplasm. It carries out the reaction UMP + ATP = UDP + ADP. It functions in the pathway pyrimidine metabolism; CTP biosynthesis via de novo pathway; UDP from UMP (UMPK route): step 1/1. Inhibited by UTP. Its function is as follows. Catalyzes the reversible phosphorylation of UMP to UDP. This Staphylothermus marinus (strain ATCC 43588 / DSM 3639 / JCM 9404 / F1) protein is Uridylate kinase.